A 398-amino-acid polypeptide reads, in one-letter code: 2-amino-3-ketobutyrate coenzyme A ligase (398 aa).

111 to 112 (CF) provides a ligand contact to pyridoxal 5'-phosphate. His-136 is a binding site for substrate. Pyridoxal 5'-phosphate-binding positions include Ser-185, 210–213 (DDSH), 241–244 (TLGK), and 274–275 (SN). Lys-244 is subject to N6-(pyridoxal phosphate)lysine. Residue Arg-368 participates in substrate binding.

This sequence belongs to the class-II pyridoxal-phosphate-dependent aminotransferase family. As to quaternary structure, homodimer. Pyridoxal 5'-phosphate is required as a cofactor.

The enzyme catalyses glycine + acetyl-CoA = (2S)-2-amino-3-oxobutanoate + CoA. It participates in amino-acid degradation; L-threonine degradation via oxydo-reductase pathway; glycine from L-threonine: step 2/2. Catalyzes the cleavage of 2-amino-3-ketobutyrate to glycine and acetyl-CoA. This Escherichia coli (strain K12) protein is 2-amino-3-ketobutyrate coenzyme A ligase.